A 274-amino-acid polypeptide reads, in one-letter code: Dermonecrotic toxin SdSicTox-betaIIB1bviii (274 aa).

The active site involves histidine 5. The Mg(2+) site is built by glutamate 25 and aspartate 27. The active-site Nucleophile is the histidine 41. Disulfide bonds link cysteine 45-cysteine 51 and cysteine 47-cysteine 190. Mg(2+) is bound at residue aspartate 85.

This sequence belongs to the arthropod phospholipase D family. Class II subfamily. The cofactor is Mg(2+). As to expression, expressed by the venom gland.

The protein localises to the secreted. It carries out the reaction an N-(acyl)-sphingosylphosphocholine = an N-(acyl)-sphingosyl-1,3-cyclic phosphate + choline. The catalysed reaction is an N-(acyl)-sphingosylphosphoethanolamine = an N-(acyl)-sphingosyl-1,3-cyclic phosphate + ethanolamine. The enzyme catalyses a 1-acyl-sn-glycero-3-phosphocholine = a 1-acyl-sn-glycero-2,3-cyclic phosphate + choline. It catalyses the reaction a 1-acyl-sn-glycero-3-phosphoethanolamine = a 1-acyl-sn-glycero-2,3-cyclic phosphate + ethanolamine. In terms of biological role, dermonecrotic toxins cleave the phosphodiester linkage between the phosphate and headgroup of certain phospholipids (sphingolipid and lysolipid substrates), forming an alcohol (often choline) and a cyclic phosphate. This toxin acts on sphingomyelin (SM). It may also act on ceramide phosphoethanolamine (CPE), lysophosphatidylcholine (LPC) and lysophosphatidylethanolamine (LPE), but not on lysophosphatidylserine (LPS), and lysophosphatidylglycerol (LPG). It acts by transphosphatidylation, releasing exclusively cyclic phosphate products as second products. Induces dermonecrosis, hemolysis, increased vascular permeability, edema, inflammatory response, and platelet aggregation. The sequence is that of Dermonecrotic toxin SdSicTox-betaIIB1bviii from Sicarius cf. damarensis (strain GJB-2008) (Six-eyed sand spider).